Consider the following 3707-residue polypeptide: CUB and sushi domain-containing protein 3 (3707 aa).

Basic and acidic residues predominate over residues 1-21 (MKGSRKGESRAKESKPREPGT). The interval 1 to 22 (MKGSRKGESRAKESKPREPGTR) is disordered. The Cytoplasmic segment spans residues 1–42 (MKGSRKGESRAKESKPREPGTRRCAKCGRLDFILKKKMGIKS). The chain crosses the membrane as a helical span at residues 43–63 (GFTFWNLVFLLTLSCVKGFIY). The Extracellular portion of the chain corresponds to 64–3630 (TCGGTLKGLN…NQPHGTNSSS (3567 aa)). Cystine bridges form between Cys-65/Cys-91, Cys-178/Cys-218, Cys-204/Cys-235, and Cys-241/Cys-267. Residues 65–173 (CGGTLKGLNG…HGFKVYYEEL (109 aa)) form the CUB 1 domain. N-linked (GlcNAc...) asparagine glycans are attached at residues Asn-73 and Asn-90. The Sushi 1 domain occupies 176–237 (SSCGNPGVPP…WDFPVPICRA (62 aa)). In terms of domain architecture, CUB 2 spans 241-345 (CGGTMRGSSG…RGFSAPYQGS (105 aa)). The tract at residues 388–437 (HRLSEEQRVQVRSLSDSGLDPNTPEDQLSPHQADTQSTSRRPRNAEQIER) is disordered. Residues 411–426 (PEDQLSPHQADTQSTS) show a composition bias toward polar residues. One can recognise a Sushi 2 domain in the interval 484-545 (NLCPDPGEPE…WSDHRPVCKV (62 aa)). 6 disulfide bridges follow: Cys-486–Cys-526, Cys-512–Cys-543, Cys-548–Cys-574, Cys-664–Cys-704, Cys-690–Cys-717, and Cys-721–Cys-747. One can recognise a CUB 3 domain in the interval 548-659 (CGSNLQGPSG…VGFKVNYKEI (112 aa)). The Sushi 3 domain maps to 662-719 (ESCGDPGTPLYGIREGDGFSNRDVLRFECQFGFELIGEKSIVCQENNQWSANIPICIF). The CUB 4 domain maps to 721 to 829 (CLSNFTAPMG…RGFNITYNTF (109 aa)). Asn-724 and Asn-823 each carry an N-linked (GlcNAc...) asparagine glycan. Positions 832 to 893 (NECPDPGIPI…WSGPIPRCGA (62 aa)) constitute a Sushi 4 domain. 3 cysteine pairs are disulfide-bonded: Cys-834/Cys-875, Cys-860/Cys-891, and Cys-895/Cys-921. One can recognise a CUB 5 domain in the interval 895–1003 (CGGHFSAPSG…NGFKIHYESV (109 aa)). Asn-966 carries N-linked (GlcNAc...) asparagine glycosylation. A Sushi 5 domain is found at 1008-1065 (YSCLDPGIPVHGRRYGHDFSIGSTVSFSCDPGYRLSHEEPLLCEKNHWWSHPLPTCDA). Intrachain disulfides connect Cys-1010-Cys-1050, Cys-1036-Cys-1063, and Cys-1067-Cys-1093. Residues 1067–1177 (CGGDVRGPSG…EGFNITFSEY (111 aa)) form the CUB 6 domain. N-linked (GlcNAc...) asparagine glycosylation is found at Asn-1092, Asn-1126, and Asn-1171. One can recognise a Sushi 6 domain in the interval 1180 to 1239 (EPCEDPGIPQYGSRVGFSFGVGDTLTFSCSLGYRLEGSSEIICLGGGRRVWSAPLPRCVA). 3 cysteine pairs are disulfide-bonded: Cys-1182-Cys-1222, Cys-1208-Cys-1237, and Cys-1241-Cys-1267. The region spanning 1241–1349 (CGASATNNEG…EGFQLVYTSF (109 aa)) is the CUB 7 domain. N-linked (GlcNAc...) asparagine glycosylation occurs at Asn-1280. The 61-residue stretch at 1352 to 1412 (SHCEDPGIPQ…WDYPLPSCIA (61 aa)) folds into the Sushi 7 domain. Cystine bridges form between Cys-1354/Cys-1395, Cys-1381/Cys-1410, Cys-1414/Cys-1441, Cys-1528/Cys-1568, Cys-1554/Cys-1584, Cys-1588/Cys-1614, Cys-1701/Cys-1741, Cys-1727/Cys-1758, Cys-1762/Cys-1788, Cys-1878/Cys-1918, Cys-1904/Cys-1935, and Cys-1939/Cys-1965. Residues 1414-1523 (CGGRFKGESS…SGFAIQFSSS (110 aa)) enclose the CUB 8 domain. In terms of domain architecture, Sushi 8 spans 1526–1586 (TACRDPGVPM…WQPSPPVCIA (61 aa)). N-linked (GlcNAc...) asparagine glycosylation is present at Asn-1536. A CUB 9 domain is found at 1588–1696 (CGGNLTGSSG…TGFHLEYKAK (109 aa)). N-linked (GlcNAc...) asparagine glycans are attached at residues Asn-1591 and Asn-1709. The 62-residue stretch at 1699–1760 (ESCFDPGNIM…WNRVLPSCHA (62 aa)) folds into the Sushi 9 domain. The 109-residue stretch at 1762-1870 (CGSRSTGSEG…KGFHFVYQAV (109 aa)) folds into the CUB 10 domain. N-linked (GlcNAc...) asparagine glycosylation occurs at Asn-1781. Residues 1876-1937 (TQCSSVPEPR…WNDSLPTCIV (62 aa)) enclose the Sushi 10 domain. Asn-1929 carries N-linked (GlcNAc...) asparagine glycosylation. Positions 1939–2047 (CGGILTKRKG…AGFHLEYTAI (109 aa)) constitute a CUB 11 domain. A glycan (N-linked (GlcNAc...) asparagine) is linked at Asn-2019. The Sushi 11 domain occupies 2050–2109 (DSCPEPQTPSSGIKVGDRYMVGDVVSFQCDQGYSLQGHSHITCMPGPVRRWNYPIPICLA). Intrachain disulfides connect Cys-2052-Cys-2092, Cys-2078-Cys-2107, and Cys-2111-Cys-2137. The CUB 12 domain occupies 2111-2219 (CGGAMSDFSG…QGFHIVYQAY (109 aa)). A glycan (N-linked (GlcNAc...) asparagine) is linked at Asn-2155. The 60-residue stretch at 2222 to 2281 (QSCPDPRPFRNGFVIGNDFTVGQTISFECFPGYTLIGNSALTCLHGVSRNWNHPLPRCEA) folds into the Sushi 12 domain. 36 cysteine pairs are disulfide-bonded: Cys-2224–Cys-2264, Cys-2250–Cys-2279, Cys-2283–Cys-2309, Cys-2395–Cys-2437, Cys-2423–Cys-2452, Cys-2456–Cys-2484, Cys-2569–Cys-2610, Cys-2596–Cys-2627, Cys-2632–Cys-2674, Cys-2658–Cys-2689, Cys-2694–Cys-2739, Cys-2725–Cys-2754, Cys-2759–Cys-2799, Cys-2785–Cys-2812, Cys-2817–Cys-2857, Cys-2843–Cys-2870, Cys-2875–Cys-2915, Cys-2901–Cys-2928, Cys-2933–Cys-2977, Cys-2963–Cys-2990, Cys-2995–Cys-3035, Cys-3021–Cys-3048, Cys-3056–Cys-3096, Cys-3082–Cys-3109, Cys-3114–Cys-3155, Cys-3141–Cys-3168, Cys-3173–Cys-3215, Cys-3199–Cys-3228, Cys-3233–Cys-3273, Cys-3259–Cys-3286, Cys-3291–Cys-3331, Cys-3317–Cys-3344, Cys-3352–Cys-3393, Cys-3379–Cys-3406, Cys-3411–Cys-3453, and Cys-3438–Cys-3466. The CUB 13 domain occupies 2283 to 2394 (CGGNITAMNG…LSYHAYQLRV (112 aa)). 2 N-linked (GlcNAc...) asparagine glycosylation sites follow: Asn-2286 and Asn-2291. Residues 2393–2454 (RVCQPPPPVP…MDGAPPVCQV (62 aa)) form the Sushi 13 domain. The 112-residue stretch at 2456-2567 (CPANELRLDS…KGFRIRYIAF (112 aa)) folds into the CUB 14 domain. 15 consecutive Sushi domains span residues 2567–2629 (FYCS…ACQA), 2630–2691 (ISCG…RCVV), 2692–2756 (VTCP…YCQI), 2757–2814 (ISCG…RCLA), 2815–2872 (GHCG…SCVP), 2873–2930 (VSCG…VCKV), 2931–2992 (VNCS…ECIM), 2993–3050 (IDCG…HCSG), 3054–3111 (GTCG…ECKA), 3112–3170 (VQCG…NCTI), 3171–3230 (ISCG…TCRA), 3231–3288 (VTCS…QCLP), 3289–3346 (KFCG…HCIE), 3350–3408 (TSCE…ECIP), and 3409–3468 (HSCK…VCEA). Positions 3052–3065 (TTGTCGDPGTPGHG) are enriched in low complexity. The interval 3052-3071 (TTGTCGDPGTPGHGSRQESD) is disordered. A helical membrane pass occupies residues 3631 to 3651 (VAIAILVPFFALIFAGFGFYL). The Cytoplasmic portion of the chain corresponds to 3652 to 3707 (YKQRTAPKTQYTGCSVHENNNGQAAFENPMYDTNAKSVEGKAVRFDPNLNTVCTMV).

It belongs to the CSMD family. In terms of tissue distribution, expressed in the apical dendrites of postnatal hippocampal neurons (at protein level).

It is found in the cell membrane. Its function is as follows. Involved in dendrite development. In Mus musculus (Mouse), this protein is CUB and sushi domain-containing protein 3 (Csmd3).